We begin with the raw amino-acid sequence, 184 residues long: Protein GrpE (184 aa).

Positions 1-26 (MANEQNEQAQDIQNEQVEQSNEQTQA) are enriched in polar residues. Residues 1–34 (MANEQNEQAQDIQNEQVEQSNEQTQAEGVEQAND) form a disordered region.

Belongs to the GrpE family. As to quaternary structure, homodimer.

The protein resides in the cytoplasm. Functionally, participates actively in the response to hyperosmotic and heat shock by preventing the aggregation of stress-denatured proteins, in association with DnaK and GrpE. It is the nucleotide exchange factor for DnaK and may function as a thermosensor. Unfolded proteins bind initially to DnaJ; upon interaction with the DnaJ-bound protein, DnaK hydrolyzes its bound ATP, resulting in the formation of a stable complex. GrpE releases ADP from DnaK; ATP binding to DnaK triggers the release of the substrate protein, thus completing the reaction cycle. Several rounds of ATP-dependent interactions between DnaJ, DnaK and GrpE are required for fully efficient folding. The sequence is that of Protein GrpE from Acinetobacter baumannii (strain AB307-0294).